A 188-amino-acid chain; its full sequence is Calcium load-activated calcium channel (188 aa).

Over Met-1–Met-4 the chain is Lumenal. The helical transmembrane segment at Phe-5–Arg-32 threads the bilayer. Positions Arg-32 to Lys-89 form a coiled coil. Over Thr-33–Val-86 the chain is Cytoplasmic. Residue Ser-60 is modified to Phosphoserine. The chain crosses the membrane as a helical span at residues Arg-87–Asn-106. At Ser-107 to Thr-120 the chain is on the lumenal side. Residues Pro-121–His-130 lie within the membrane without spanning it. At Arg-131–Asp-140 the chain is on the lumenal side. The chain crosses the membrane as a helical span at residues Cys-141–Leu-162. Residues Gly-163–Ser-188 lie on the Cytoplasmic side of the membrane. Phosphoserine is present on Ser-188.

This sequence belongs to the TMCO1 family. Homodimer and homotetramer. Homodimer under resting conditions; forms homotetramers following ER calcium overload. Component of the GET- and EMC-like (GEL) complex, composed of RAB5IF/OPTI and TMCO1. The GEL complex is part of the multi-pass translocon (MPT) complex, composed of three subcomplexes, the GEL complex (composed of RAB5IF/OPTI and TMCO1), the BOS complex (composed of NCLN/Nicalin, NOMO1 and TMEM147) and the PAT complex (composed of WDR83OS/Asterix and CCDC47). The MPT complex associates with the SEC61 complex.

The protein localises to the endoplasmic reticulum membrane. It is found in the golgi apparatus membrane. Its subcellular location is the mitochondrion membrane. It carries out the reaction Ca(2+)(in) = Ca(2+)(out). Endoplasmic reticulum (ER) calcium-selective channel preventing intracellular Ca2(+) stores from overfilling and maintaining calcium homeostasis in the ER. In response to endoplasmic reticulum (ER) Ca2(+) overloading, assembles into a homotetramer, forming a functional calcium-selective channel facilitating Ca2(+) release. Mediates ER Ca2(+) homeostasis in osteoblasts and plays a key role in bone formation, via the CaMKII-HDAC4-RUNX2 signaling axis. Component of the multi-pass translocon (MPT) complex that mediates insertion of multi-pass membrane proteins into the lipid bilayer of membranes. The MPT complex takes over after the SEC61 complex: following membrane insertion of the first few transmembrane segments of proteins by the SEC61 complex, the MPT complex occludes the lateral gate of the SEC61 complex to promote insertion of subsequent transmembrane regions. Within the MPT complex, the GEL subcomplex may mediate insertion of transmembrane regions into the membrane. The polypeptide is Calcium load-activated calcium channel (Bos taurus (Bovine)).